A 215-amino-acid polypeptide reads, in one-letter code: E3 ubiquitin-protein ligase znrf1 (215 aa).

Disordered stretches follow at residues 1–39 and 66–96; these read MGGK…PGGT and YTPR…ETGG. A lipid anchor (N-myristoyl glycine) is attached at Gly-2. The segment at 172 to 213 adopts an RING-type; atypical zinc-finger fold; it reads CVICLEELQQGDTIARLPCLCIYHKSCIDSWFEINRSCPEHP.

Its subcellular location is the endosome. It localises to the lysosome. The protein resides in the membrane. It carries out the reaction S-ubiquitinyl-[E2 ubiquitin-conjugating enzyme]-L-cysteine + [acceptor protein]-L-lysine = [E2 ubiquitin-conjugating enzyme]-L-cysteine + N(6)-ubiquitinyl-[acceptor protein]-L-lysine.. Its pathway is protein modification; protein ubiquitination. E3 ubiquitin-protein ligase that plays a role in neuron cells differentiation. Plays a role in the establishment and maintenance of neuronal transmission and plasticity. This Danio rerio (Zebrafish) protein is E3 ubiquitin-protein ligase znrf1 (znrf1).